A 601-amino-acid chain; its full sequence is MLQQWLRQSPRAARVLRGSCCRGPQSGSLRHSPLPTAPHRCIRSLQTSATESKERIPLRKQLKQDAKALKAQKRQKRASEEASRTKWELTVGIEIHAQLNTETKLFSRASTSNTDTPNSNVALFDLAFPGSQPEFQATALLPALRAAIALNCDIQPVSRFDRKHYFYQDQPAGYQITQYYEPFAKNGYVDLFPHDGIAPEDGDHVRIGIKQIQLEQDTAKSQEYPPSTQLLDFNRVSHPLIEIITMPQIHNPATAAACVRKIQAVLQSCSAVTTGMELGGLRADVNVSIRRRDEAPGTHQYGGIGGLGQRTEIKNLSSFKAVEDAVIAEKNRQIAVLESGGVIEGETRGWTIGSTETRKLRGKEGEVDYRYMPDPDLPPLIIGHDLISNLRDSLPTPPDQLIEMLAGTEYGLSIEDAKPLIELDDGARLEYYQDVVDILRDLQQDKDAKSRGGLARMAGNWVLHELGGLCTKADLAWDAQRVPAETLAQIIDQLQRKRITGATAKQVLAMVFDGDRRPVPQLLEEENLLLRPLSRDEYLALAEAAIGQNPQMVEQIRAKNQLGKLGWFVGQMMRMGEKGRVEAQKADEILRELILGKSDQP.

Residues Met-1–Ser-52 constitute a mitochondrion transit peptide.

The protein belongs to the GatB/GatE family. GatB subfamily. As to quaternary structure, subunit of the heterotrimeric GatCAB amidotransferase (AdT) complex, composed of A, B and C subunits.

It localises to the mitochondrion. It catalyses the reaction L-glutamyl-tRNA(Gln) + L-glutamine + ATP + H2O = L-glutaminyl-tRNA(Gln) + L-glutamate + ADP + phosphate + H(+). Allows the formation of correctly charged Gln-tRNA(Gln) through the transamidation of misacylated Glu-tRNA(Gln) in the mitochondria. The reaction takes place in the presence of glutamine and ATP through an activated gamma-phospho-Glu-tRNA(Gln). This is Glutamyl-tRNA(Gln) amidotransferase subunit B, mitochondrial from Aspergillus fumigatus (strain ATCC MYA-4609 / CBS 101355 / FGSC A1100 / Af293) (Neosartorya fumigata).